The primary structure comprises 1009 residues: DENN domain-containing protein 1A (1009 aa).

Residues 13–145 (FEVYVEVAYP…HKLPIPDPGV (133 aa)) enclose the uDENN domain. Residues 162-298 (ELPSIPENRN…VISSLKNRLK (137 aa)) form the cDENN domain. A dDENN domain is found at 300–378 (VSTTTGDGVA…DGRLDLLNSG (79 aa)). The FXDXF motif signature appears at 381 to 385 (FSDVF). The interval 453 to 564 (DIAENGCAPT…TGPVPAPPDR (112 aa)) is disordered. Residue Ser-473 is modified to Phosphoserine. Residues 477–489 (EAKDPKLREDRRP) are compositionally biased toward basic and acidic residues. A compositionally biased stretch (basic residues) spans 500–509 (PRPHVVKRPK). Phosphothreonine is present on Thr-519. Phosphoserine is present on residues Ser-520, Ser-523, Ser-536, Ser-538, and Ser-546. Residues 569–578 (DLLEDVFSNL) carry the Clathrin box motif. Position 592 is a phosphoserine (Ser-592). The interval 648-714 (IPSKPPAASP…RKTPELGIVP (67 aa)) is disordered. The residue at position 749 (Ser-749) is a Phosphoserine. 2 disordered regions span residues 796 to 831 (STLP…QPPL) and 928 to 1009 (RSSA…ETFE). Composition is skewed to pro residues over residues 820 to 831 (AGTPTPFPQPPL) and 945 to 957 (GDPP…PPQG). Over residues 972-983 (DPFEDLLQKTKQ) the composition is skewed to basic and acidic residues. Positions 986 to 997 (SPSPALAPAPDS) are enriched in low complexity. Residues 999-1009 (EQLRKQWETFE) show a composition bias toward basic and acidic residues.

In terms of assembly, interacts with RAB35. Interacts with clathrin and with the adapter protein complex 2, AP-2. Interacts with ITSN1 and SH3GL2. Interacts (when phosphorylated) with YWHAE. Post-translationally, phosphorylated on serine and/or threonine in an Akt-dependent manner. Phosphorylation probably regulates the guanine nucleotide exchange factor (GEF) activity, possibly by disrupting an intramolecular interaction between the DENN domain and the C-terminus of the protein, thereby relieving the autoinhibition.

The protein resides in the cytoplasmic vesicle. It is found in the clathrin-coated vesicle membrane. Its subcellular location is the presynaptic cell membrane. Its activity is regulated as follows. The guanine nucleotide exchange factor (GEF) activity is autoinhibited. Autoinhibition may be the result of intramolecular interaction between the DENN domain and the C-terminus, which is disrupted upon phosphorylation. Activation is regulated by Akt activation. Its function is as follows. Guanine nucleotide exchange factor (GEF) regulating clathrin-mediated endocytosis through RAB35 activation. Promotes the exchange of GDP to GTP, converting inactive GDP-bound RAB35 into its active GTP-bound form. Regulates clathrin-mediated endocytosis of synaptic vesicles and mediates exit from early endosomes. Binds phosphatidylinositol-phosphates (PtdInsPs), with some preference for PtdIns(3)P. The polypeptide is DENN domain-containing protein 1A (Homo sapiens (Human)).